We begin with the raw amino-acid sequence, 394 residues long: MALTVNTNIASLNTQRNLNNSSASLNTSLQRLSTGSRINSAKDDAAGLQIANRLTSQVNGLNVATKNANDGISLAQTAEGALQQSTNILQRMRDLSLQSANGSNSDSERTALNGEVKQLQKELDRISNTTTFGGRKLLDGSFGVASFQVGSAANEIISVGIDEMSAESLNGTYFKADGGGAVTAATASGTVDIAIGITGGSAVNVKVDMKGNETAEQAAAKIAAAVNDANVGIGAFSDGDTISYVSKAGKDGSGAITSAVSGVVIADTGSTGVGTAAGVTPSATAFAKTNDTVAKIDISTAKGAQSAVLVIDEAIKQIDAQRADLGAVQNRFDNTINNLKNIGENVSAARGRIEDTDFAAETANLTKNQVLQQAGTAILAQANQLPQSVLSLLR.

This sequence belongs to the bacterial flagellin family. In terms of processing, phosphorylated on tyrosine residue(s). Flagellin from strain 5939 but not from strain 170018 is glycosylated.

It is found in the secreted. Its subcellular location is the bacterial flagellum. Flagellin is the subunit protein which polymerizes to form the filaments of bacterial flagella. The chain is A-type flagellin (fliC) from Pseudomonas aeruginosa.